Here is a 456-residue protein sequence, read N- to C-terminus: Membrane-bound lytic murein transglycosylase F (456 aa).

The first 22 residues, 1–22 (MKTWPSRAVSLLLLALALPVGC), serve as a signal peptide directing secretion. The non-LT domain stretch occupies residues 23–267 (SEPPPPVRDP…ALDETWFGRF (245 aa)). Residues 268–456 (GDYDYVDVAR…YRALLAAQDL (189 aa)) are LT domain. The active site involves glutamate 314.

In the N-terminal section; belongs to the bacterial solute-binding protein 3 family. The protein in the C-terminal section; belongs to the transglycosylase Slt family.

The protein resides in the cell outer membrane. The catalysed reaction is Exolytic cleavage of the (1-&gt;4)-beta-glycosidic linkage between N-acetylmuramic acid (MurNAc) and N-acetylglucosamine (GlcNAc) residues in peptidoglycan, from either the reducing or the non-reducing ends of the peptidoglycan chains, with concomitant formation of a 1,6-anhydrobond in the MurNAc residue.. Functionally, murein-degrading enzyme that degrades murein glycan strands and insoluble, high-molecular weight murein sacculi, with the concomitant formation of a 1,6-anhydromuramoyl product. Lytic transglycosylases (LTs) play an integral role in the metabolism of the peptidoglycan (PG) sacculus. Their lytic action creates space within the PG sacculus to allow for its expansion as well as for the insertion of various structures such as secretion systems and flagella. The protein is Membrane-bound lytic murein transglycosylase F of Maricaulis maris (strain MCS10) (Caulobacter maris).